The primary structure comprises 293 residues: Putative F-box/kelch-repeat protein At4g34170 (293 aa).

The F-box domain occupies 9 to 55 (VKTMLMLHDDLILNCLARVSRSNHPTLSLVCKRFHSLLASVELYQTR). Kelch repeat units follow at residues 94–140 (NIDA…TLDG), 141–187 (KIYV…ESVR), and 226–272 (SYCV…LADY).

In Arabidopsis thaliana (Mouse-ear cress), this protein is Putative F-box/kelch-repeat protein At4g34170.